A 100-amino-acid chain; its full sequence is Small ribosomal subunit protein bS18 (100 aa).

Residues 1-23 (MTFIRKPAGQAKPQKYSTDAYGR) form a disordered region.

Belongs to the bacterial ribosomal protein bS18 family. In terms of assembly, part of the 30S ribosomal subunit. Forms a tight heterodimer with protein bS6.

Binds as a heterodimer with protein bS6 to the central domain of the 16S rRNA, where it helps stabilize the platform of the 30S subunit. In Endomicrobium trichonymphae, this protein is Small ribosomal subunit protein bS18.